The sequence spans 154 residues: Crossover junction endodeoxyribonuclease RuvC (154 aa).

Catalysis depends on residues D7, E67, and D139. 3 residues coordinate Mg(2+): D7, E67, and D139.

This sequence belongs to the RuvC family. Homodimer which binds Holliday junction (HJ) DNA. The HJ becomes 2-fold symmetrical on binding to RuvC with unstacked arms; it has a different conformation from HJ DNA in complex with RuvA. In the full resolvosome a probable DNA-RuvA(4)-RuvB(12)-RuvC(2) complex forms which resolves the HJ. Mg(2+) serves as cofactor.

It is found in the cytoplasm. It catalyses the reaction Endonucleolytic cleavage at a junction such as a reciprocal single-stranded crossover between two homologous DNA duplexes (Holliday junction).. Functionally, the RuvA-RuvB-RuvC complex processes Holliday junction (HJ) DNA during genetic recombination and DNA repair. Endonuclease that resolves HJ intermediates. Cleaves cruciform DNA by making single-stranded nicks across the HJ at symmetrical positions within the homologous arms, yielding a 5'-phosphate and a 3'-hydroxyl group; requires a central core of homology in the junction. The consensus cleavage sequence is 5'-(A/T)TT(C/G)-3'. Cleavage occurs on the 3'-side of the TT dinucleotide at the point of strand exchange. HJ branch migration catalyzed by RuvA-RuvB allows RuvC to scan DNA until it finds its consensus sequence, where it cleaves and resolves the cruciform DNA. The polypeptide is Crossover junction endodeoxyribonuclease RuvC (Parasynechococcus marenigrum (strain WH8102)).